A 238-amino-acid chain; its full sequence is Thiamine import ATP-binding protein ThiQ (238 aa).

The ABC transporter domain occupies 1-234 (MSSTALAVKG…RDIAAINRFL (234 aa)). 36-43 (GASGSGKS) serves as a coordination point for ATP.

Belongs to the ABC transporter superfamily. Thiamine importer (TC 3.A.1.19.1) family. As to quaternary structure, the complex is composed of two ATP-binding proteins (ThiQ), two transmembrane proteins (ThiP) and a solute-binding protein (ThiB).

It is found in the cell inner membrane. The catalysed reaction is thiamine(out) + ATP + H2O = thiamine(in) + ADP + phosphate + H(+). Its function is as follows. Part of the ABC transporter complex ThiBPQ involved in thiamine import. Responsible for energy coupling to the transport system. This chain is Thiamine import ATP-binding protein ThiQ, found in Rhizobium meliloti (strain 1021) (Ensifer meliloti).